Consider the following 584-residue polypeptide: ATP synthase subunit alpha, mitochondrial (584 aa).

Residues 1–24 (MRRFGSKFASGLASRCALACPLAS) constitute a mitochondrion transit peptide. Residues 207–214 (DRQTGKTS) and Q464 each bind ATP.

It belongs to the ATPase alpha/beta chains family. In terms of assembly, F-type ATPases have 2 components, F(1) - the catalytic core - and F(o) - the membrane proton channel. F(1) has five subunits: alpha(3), beta(3), gamma(1), delta(1), epsilon(1), plus the additional subunit P18 (Tb427.05.1710) that is not present in F(1)F(o) ATP synthase from metazoa. Subunit P18 (Tb927.5.1710) interacts with the alpha subunit with a 1:1 stoichiometry; the interaction is direct. Subunit gamma is part of the central stalk. F(o) has three main subunits: a, b and c. The trypanosomal ATPase complex contains additional subunits that are not present in the F(1)F(o) ATP synthase from metazoa.

Its subcellular location is the mitochondrion. The protein resides in the mitochondrion inner membrane. Mitochondrial membrane ATP synthase (F(1)F(o) ATP synthase) produces ATP from ADP in the presence of a proton gradient across the membrane which is generated by electron transport complexes of the respiratory chain. F-type ATPases consist of two structural domains, F(1) - containing the extramembraneous catalytic core, and F(o) - containing the membrane proton channel, linked together by a central stalk and a peripheral stalk. During catalysis, ATP synthesis in the catalytic domain of F(1) is coupled via a rotary mechanism of the central stalk subunits to proton translocation. Subunits alpha and beta form the catalytic core in F(1). Rotation of the central stalk against the surrounding alpha(3)beta(3) subunits leads to hydrolysis of ATP in three separate catalytic sites on the beta subunits. Subunit alpha does not bear the catalytic high-affinity ATP-binding sites. Contrary to the procyclic, insect form that requires F(1)F(o) ATP synthase for ATP synthesis, the bloodstream form relies on ATP hydrolysis by F(1)F(o) ATP synthase to maintain its mitochondrial membrane potential. This is ATP synthase subunit alpha, mitochondrial from Trypanosoma brucei brucei.